A 78-amino-acid polypeptide reads, in one-letter code: LYR motif-containing protein 9 (78 aa).

It belongs to the complex I LYR family. LYRM9 subfamily.

In Mus musculus (Mouse), this protein is LYR motif-containing protein 9 (Lyrm9).